We begin with the raw amino-acid sequence, 174 residues long: 16S rRNA aminocarboxypropyltransferase (174 aa).

S-adenosyl-L-methionine contacts are provided by T26, L73, L97, and S116.

Belongs to the TDD superfamily. TSR3 family.

The protein resides in the cytoplasm. The enzyme catalyses an N(1)-methylpseudouridine in rRNA + S-adenosyl-L-methionine = N(1)-methyl-N(3)-[(3S)-3-amino-3-carboxypropyl]pseudouridine in rRNA + S-methyl-5'-thioadenosine + H(+). Aminocarboxypropyltransferase that catalyzes the aminocarboxypropyl transfer on pseudouridine corresponding to position 914 in M.jannaschii 16S rRNA. It constitutes the last step in biosynthesis of the hypermodified N1-methyl-N3-(3-amino-3-carboxypropyl) pseudouridine (m1acp3-Psi). This Methanosarcina acetivorans (strain ATCC 35395 / DSM 2834 / JCM 12185 / C2A) protein is 16S rRNA aminocarboxypropyltransferase.